The primary structure comprises 485 residues: Regulatory protein ViaA (485 aa).

The protein belongs to the ViaA family. As to quaternary structure, homodimer. Interacts with RavA.

The protein resides in the cytoplasm. Its function is as follows. Component of the RavA-ViaA chaperone complex, which may act on the membrane to optimize the function of some of the respiratory chains. ViaA stimulates the ATPase activity of RavA. The sequence is that of Regulatory protein ViaA from Photorhabdus laumondii subsp. laumondii (strain DSM 15139 / CIP 105565 / TT01) (Photorhabdus luminescens subsp. laumondii).